A 140-amino-acid polypeptide reads, in one-letter code: Ribosomal RNA large subunit methyltransferase H (140 aa).

Residues leucine 55 and glycine 87 each contribute to the S-adenosyl-L-methionine site.

This sequence belongs to the RNA methyltransferase RlmH family. In terms of assembly, homodimer.

It is found in the cytoplasm. The catalysed reaction is pseudouridine(1915) in 23S rRNA + S-adenosyl-L-methionine = N(3)-methylpseudouridine(1915) in 23S rRNA + S-adenosyl-L-homocysteine + H(+). In terms of biological role, specifically methylates the pseudouridine at position 1915 (m3Psi1915) in 23S rRNA. The polypeptide is Ribosomal RNA large subunit methyltransferase H (Erythrobacter litoralis (strain HTCC2594)).